The following is a 270-amino-acid chain: Thiazole synthase (270 aa).

The Schiff-base intermediate with DXP role is filled by K112. 1-deoxy-D-xylulose 5-phosphate-binding positions include G173, 199 to 200 (AG), and 221 to 222 (NS).

The protein belongs to the ThiG family. As to quaternary structure, homotetramer. Forms heterodimers with either ThiH or ThiS.

The protein resides in the cytoplasm. The catalysed reaction is [ThiS sulfur-carrier protein]-C-terminal-Gly-aminoethanethioate + 2-iminoacetate + 1-deoxy-D-xylulose 5-phosphate = [ThiS sulfur-carrier protein]-C-terminal Gly-Gly + 2-[(2R,5Z)-2-carboxy-4-methylthiazol-5(2H)-ylidene]ethyl phosphate + 2 H2O + H(+). It participates in cofactor biosynthesis; thiamine diphosphate biosynthesis. Functionally, catalyzes the rearrangement of 1-deoxy-D-xylulose 5-phosphate (DXP) to produce the thiazole phosphate moiety of thiamine. Sulfur is provided by the thiocarboxylate moiety of the carrier protein ThiS. In vitro, sulfur can be provided by H(2)S. The sequence is that of Thiazole synthase from Pseudomonas putida (strain ATCC 700007 / DSM 6899 / JCM 31910 / BCRC 17059 / LMG 24140 / F1).